We begin with the raw amino-acid sequence, 120 residues long: Large ribosomal subunit protein uL18 (120 aa).

The protein belongs to the universal ribosomal protein uL18 family. Part of the 50S ribosomal subunit; part of the 5S rRNA/L5/L18/L25 subcomplex. Contacts the 5S and 23S rRNAs.

This is one of the proteins that bind and probably mediate the attachment of the 5S RNA into the large ribosomal subunit, where it forms part of the central protuberance. This Rhizobium etli (strain CIAT 652) protein is Large ribosomal subunit protein uL18.